Reading from the N-terminus, the 383-residue chain is MCYQTSKKKRRSRKRRAQEEKEKMGKGVVSEKVKLVVALITLQFCFAGFHIVSRVALNIGVSKVVYPVYRNLLALLLIGPFAYFFEKKERPPLTISLLAQFFFLALIGITANQGFYLLGLYYATPTFASAMQNSVPAITFIMACALRLEHIDLVRKHGVAKVLGTLVSIGGATVITLYRGFPIFDQGLNMQKEEVVGSDNSHSLTLGWLYLMGHCLSWAGWMVLQAPVLKQYPAKLTLTSFTCFFGLIQFLVIALFVETDLNNWIIVSWEELFTILYAGIIASGLVVYLQTWCIYKSGPVFVAVFQPLQTLLVAAMAFLILGDQLYSGGIVGAVFIMLGLYLVLWGKNEERKLALEESQQDPESLTKHLLEAQHKKSNSESEV.

Residues 1–16 (MCYQTSKKKRRSRKRR) are compositionally biased toward basic residues. Residues 1-23 (MCYQTSKKKRRSRKRRAQEEKEK) are disordered. 10 consecutive transmembrane segments (helical) span residues 33-53 (VKLVVALITLQFCFAGFHIVS), 65-85 (VYPVYRNLLALLLIGPFAYFF), 91-111 (PPLTISLLAQFFFLALIGITA), 126-146 (TFASAMQNSVPAITFIMACAL), 158-178 (GVAKVLGTLVSIGGATVITLY), 204-224 (LTLGWLYLMGHCLSWAGWMVL), 237-257 (TLTSFTCFFGLIQFLVIALFV), 272-292 (LFTILYAGIIASGLVVYLQTW), 300-320 (VFVAVFQPLQTLLVAAMAFLI), and 325-345 (LYSGGIVGAVFIMLGLYLVLW). 2 consecutive EamA domains span residues 44-173 (FCFA…GGAT) and 216-344 (LSWA…YLVL).

It belongs to the drug/metabolite transporter (DMT) superfamily. Plant drug/metabolite exporter (P-DME) (TC 2.A.7.4) family.

Its subcellular location is the membrane. This Arabidopsis thaliana (Mouse-ear cress) protein is WAT1-related protein At3g18200.